A 181-amino-acid polypeptide reads, in one-letter code: Protein Syd (181 aa).

The protein belongs to the Syd family.

Its subcellular location is the cell inner membrane. Functionally, interacts with the SecY protein in vivo. May bind preferentially to an uncomplexed state of SecY, thus functioning either as a chelating agent for excess SecY in the cell or as a regulatory factor that negatively controls the translocase function. In Salmonella arizonae (strain ATCC BAA-731 / CDC346-86 / RSK2980), this protein is Protein Syd.